The sequence spans 205 residues: Thiamine-phosphate synthase (205 aa).

Residues 34 to 38 and asparagine 66 contribute to the 4-amino-2-methyl-5-(diphosphooxymethyl)pyrimidine site; that span reads QLRCK. Positions 67 and 86 each coordinate Mg(2+). Serine 105 is a binding site for 4-amino-2-methyl-5-(diphosphooxymethyl)pyrimidine. 131–133 contacts 2-[(2R,5Z)-2-carboxy-4-methylthiazol-5(2H)-ylidene]ethyl phosphate; it reads TTT. Lysine 134 serves as a coordination point for 4-amino-2-methyl-5-(diphosphooxymethyl)pyrimidine. Glycine 163 provides a ligand contact to 2-[(2R,5Z)-2-carboxy-4-methylthiazol-5(2H)-ylidene]ethyl phosphate.

This sequence belongs to the thiamine-phosphate synthase family. It depends on Mg(2+) as a cofactor.

The catalysed reaction is 2-[(2R,5Z)-2-carboxy-4-methylthiazol-5(2H)-ylidene]ethyl phosphate + 4-amino-2-methyl-5-(diphosphooxymethyl)pyrimidine + 2 H(+) = thiamine phosphate + CO2 + diphosphate. It catalyses the reaction 2-(2-carboxy-4-methylthiazol-5-yl)ethyl phosphate + 4-amino-2-methyl-5-(diphosphooxymethyl)pyrimidine + 2 H(+) = thiamine phosphate + CO2 + diphosphate. It carries out the reaction 4-methyl-5-(2-phosphooxyethyl)-thiazole + 4-amino-2-methyl-5-(diphosphooxymethyl)pyrimidine + H(+) = thiamine phosphate + diphosphate. It participates in cofactor biosynthesis; thiamine diphosphate biosynthesis; thiamine phosphate from 4-amino-2-methyl-5-diphosphomethylpyrimidine and 4-methyl-5-(2-phosphoethyl)-thiazole: step 1/1. In terms of biological role, condenses 4-methyl-5-(beta-hydroxyethyl)thiazole monophosphate (THZ-P) and 2-methyl-4-amino-5-hydroxymethyl pyrimidine pyrophosphate (HMP-PP) to form thiamine monophosphate (TMP). The polypeptide is Thiamine-phosphate synthase (Neisseria meningitidis serogroup A / serotype 4A (strain DSM 15465 / Z2491)).